A 635-amino-acid polypeptide reads, in one-letter code: Probable ethylene response sensor 2 (635 aa).

3 consecutive transmembrane segments (helical) span residues 24–44 (ISDF…IYFV), 59–79 (FGAF…TFAI), and 94–114 (ATAV…PDLL). Cu cation is bound by residues C66 and H70. The region spanning 159-308 (DRHTILRTTL…VVADQVAVAL (150 aa)) is the GAF domain. A Histidine kinase domain is found at 351 to 589 (VMNHEMRTPM…MFFVKLGMPE (239 aa)). H354 carries the phosphohistidine; by autocatalysis modification.

Belongs to the ethylene receptor family. In terms of assembly, homodimer. It depends on Cu cation as a cofactor. Expressed in anthers and hulls.

Its subcellular location is the endoplasmic reticulum membrane. It catalyses the reaction ATP + protein L-histidine = ADP + protein N-phospho-L-histidine.. In terms of biological role, ethylene receptor related to bacterial two-component regulators. Acts as a negative regulator of ethylene signaling. May play a role in the regulation of flowering by up-regulating GI (GIGANTEA) and RCN1 and regulate starch accumulation by down-regulating the alpha-amylase AMY3D. The chain is Probable ethylene response sensor 2 from Oryza sativa subsp. indica (Rice).